Consider the following 321-residue polypeptide: S-methyl-5'-thioadenosine phosphorylase (321 aa).

Phosphate-binding positions include T30, 73 to 74, and 106 to 107; these read RH and SA. Substrate is bound at residue M215. S216 is a phosphate binding site. Residue 239–241 coordinates substrate; that stretch reads DYD.

This sequence belongs to the PNP/MTAP phosphorylase family. MTAP subfamily. In terms of assembly, homotrimer.

It is found in the cytoplasm. The protein localises to the nucleus. The catalysed reaction is S-methyl-5'-thioadenosine + phosphate = 5-(methylsulfanyl)-alpha-D-ribose 1-phosphate + adenine. It functions in the pathway amino-acid biosynthesis; L-methionine biosynthesis via salvage pathway; S-methyl-5-thio-alpha-D-ribose 1-phosphate from S-methyl-5'-thioadenosine (phosphorylase route): step 1/1. Functionally, catalyzes the reversible phosphorylation of S-methyl-5'-thioadenosine (MTA) to adenine and 5-methylthioribose-1-phosphate. Involved in the breakdown of MTA, a major by-product of polyamine biosynthesis. Responsible for the first step in the methionine salvage pathway after MTA has been generated from S-adenosylmethionine. Has broad substrate specificity with 6-aminopurine nucleosides as preferred substrates. In Yarrowia lipolytica (strain CLIB 122 / E 150) (Yeast), this protein is S-methyl-5'-thioadenosine phosphorylase.